Here is a 110-residue protein sequence, read N- to C-terminus: Snake venom vascular endothelial growth factor toxin ICPP (110 aa).

Q1 carries the pyrrolidone carboxylic acid modification. 3 disulfide bridges follow: C14-C56, C45-C91, and C49-C93.

In terms of assembly, homodimer; disulfide-linked. Interacts with high affinity with KDR/VEGFR-2, and with a lower affinity with neuropilin-1 (NRP1) and neuropilin-2 (NRP2). As to expression, expressed by the venom gland.

Its subcellular location is the secreted. Its function is as follows. Snake venom VEGFs may contribute to venom dispersion and prey subjugation by inducing vascular permeability and hypotension. This protein increases vascular permeability and angiogenesis probably through VEGF receptor (KDR/VEGFR-2) signaling. Induces DNA synthesis in human umbilical vein endothelial cells, and promotes mouse embryonic stem cell proliferation and differentiation. It may also induce a drastic hypotensive effect after intravenous injection. The hypotension is mediated by nitric oxide (NO), which is produced by VEGF-activated endothelium NO synthase. This Macrovipera lebetinus (Levantine viper) protein is Snake venom vascular endothelial growth factor toxin ICPP.